The following is a 148-amino-acid chain: MSDPIKLHDLRPAKGANKAKTRVGRGEASKGKTAGRGTKGTKARNKVPAYFEGGQMPLQMRLPKLKGFKNNNKVIFQVVNVSDLEKAFPNGGDVAVADLVAAGLVRAKQPVKVLGNGEISVKLNVTAQKFSGSAKEKIEKAGGSVTEA.

Residues 1–12 are compositionally biased toward basic and acidic residues; it reads MSDPIKLHDLRP. Positions 1–45 are disordered; it reads MSDPIKLHDLRPAKGANKAKTRVGRGEASKGKTAGRGTKGTKARN.

It belongs to the universal ribosomal protein uL15 family. Part of the 50S ribosomal subunit.

Binds to the 23S rRNA. The polypeptide is Large ribosomal subunit protein uL15 (Corynebacterium urealyticum (strain ATCC 43042 / DSM 7109)).